The chain runs to 576 residues: Trehalase (576 aa).

Residues 1–20 (MTWELHLLLLLGLGLRSQEA) form the signal peptide. Asn-75 carries an N-linked (GlcNAc...) asparagine glycan. Residues Arg-165, 172–173 (WD), Asn-209, and 218–220 (RSQ) contribute to the substrate site. A glycan (N-linked (GlcNAc...) asparagine) is linked at Asn-258. Substrate is bound by residues 283–285 (RPE) and Gly-316. Asp-318 serves as the catalytic Proton donor/acceptor. Residue Asn-366 is glycosylated (N-linked (GlcNAc...) asparagine). Glu-511 serves as the catalytic Proton donor/acceptor. A substrate-binding site is contributed by Glu-526. A lipid anchor (GPI-anchor amidated serine) is attached at Ser-553. Residues 554 to 576 (GTQLASLGPHCLVAALLLSLLLQ) constitute a propeptide, removed in mature form.

The protein belongs to the glycosyl hydrolase 37 family. As to quaternary structure, homodimer; disulfide-linked.

The protein resides in the cell membrane. The catalysed reaction is alpha,alpha-trehalose + H2O = alpha-D-glucose + beta-D-glucose. Its function is as follows. Intestinal trehalase is probably involved in the hydrolysis of ingested trehalose. This Mus musculus (Mouse) protein is Trehalase.